Reading from the N-terminus, the 368-residue chain is Nuclease EXOG, mitochondrial (368 aa).

The N-terminal 41 residues, 1–41 (MAAKSFASRLRDSRRFLNGFLAGAVVGAAGAGLTALQFFRR), are a transit peptide targeting the mitochondrion. Catalysis depends on H140, which acts as the Proton acceptor. N171 provides a ligand contact to a divalent metal cation.

The protein belongs to the DNA/RNA non-specific endonuclease family. In terms of assembly, homodimer. A divalent metal cation is required as a cofactor.

It is found in the mitochondrion inner membrane. In terms of biological role, endo/exonuclease with nicking activity towards supercoiled DNA, a preference for single-stranded DNA and 5'-3' exonuclease activity. This chain is Nuclease EXOG, mitochondrial (Exog), found in Mus musculus (Mouse).